We begin with the raw amino-acid sequence, 466 residues long: Fumarate hydratase class II (466 aa).

Residues 99-101 (SGT), 129-132 (HPND), 139-141 (SSN), and Thr-187 each bind substrate. His-188 functions as the Proton donor/acceptor in the catalytic mechanism. Ser-318 is a catalytic residue. Substrate-binding positions include Ser-319 and 324–326 (KVN).

This sequence belongs to the class-II fumarase/aspartase family. Fumarase subfamily. Homotetramer.

It localises to the cytoplasm. It carries out the reaction (S)-malate = fumarate + H2O. It functions in the pathway carbohydrate metabolism; tricarboxylic acid cycle; (S)-malate from fumarate: step 1/1. Involved in the TCA cycle. Catalyzes the stereospecific interconversion of fumarate to L-malate. The polypeptide is Fumarate hydratase class II (Thermus thermophilus (strain ATCC BAA-163 / DSM 7039 / HB27)).